A 407-amino-acid chain; its full sequence is Aminoacylase-1 (407 aa).

At Ala2 the chain carries N-acetylalanine. Residue His80 coordinates Zn(2+). Asp82 is an active-site residue. Position 113 (Asp113) interacts with Zn(2+). Glu147 functions as the Proton acceptor in the catalytic mechanism. Zn(2+) contacts are provided by Glu148, Glu175, and His372.

This sequence belongs to the peptidase M20A family. Homodimer. Interacts with SPHK1. Zn(2+) is required as a cofactor.

It is found in the cytoplasm. The catalysed reaction is an N-acyl-L-amino acid + H2O = an L-alpha-amino acid + a carboxylate. It carries out the reaction N-acetyl-L-methionine + H2O = L-methionine + acetate. The enzyme catalyses N-acetyl-L-glutamine + H2O = L-glutamine + acetate. Catalyzes the hydrolysis of N-acetylated amino acids to acetate and free amino acids. This chain is Aminoacylase-1 (ACY1), found in Sus scrofa (Pig).